A 670-amino-acid chain; its full sequence is DNA ligase (670 aa).

NAD(+)-binding positions include 32 to 36, 81 to 82, and Glu-110; these read DAEYD and SL. Lys-112 serves as the catalytic N6-AMP-lysine intermediate. NAD(+)-binding residues include Arg-133, Glu-170, Lys-289, and Lys-313. Zn(2+)-binding residues include Cys-407, Cys-410, Cys-425, and Cys-431. Residues 590 to 670 form the BRCT domain; the sequence is ESQLSLKGQT…ALMDLLNAAN (81 aa).

It belongs to the NAD-dependent DNA ligase family. LigA subfamily. Requires Mg(2+) as cofactor. The cofactor is Mn(2+).

The enzyme catalyses NAD(+) + (deoxyribonucleotide)n-3'-hydroxyl + 5'-phospho-(deoxyribonucleotide)m = (deoxyribonucleotide)n+m + AMP + beta-nicotinamide D-nucleotide.. DNA ligase that catalyzes the formation of phosphodiester linkages between 5'-phosphoryl and 3'-hydroxyl groups in double-stranded DNA using NAD as a coenzyme and as the energy source for the reaction. It is essential for DNA replication and repair of damaged DNA. The sequence is that of DNA ligase from Shewanella frigidimarina (strain NCIMB 400).